The sequence spans 200 residues: MKKITIIAVSKNRNINNIEEAIRSGINNFGENYLQESLIKIENLKKYKNITWHFIGKIQSNKTKKIAQNFSWCQTVDREKIAVLLNKFRPKNLPPINVLIQINNLKELQNNRYIDQYQELAQLILSMPNLNLRGIMAVPSIKTNVIENNLQYEKIKTIFNRFKRQYSSVDTLSLGTSVDIKESLLATSNMVRIGRNIFNI.

At lysine 11 the chain carries N6-(pyridoxal phosphate)lysine.

The protein belongs to the pyridoxal phosphate-binding protein YggS/PROSC family. In terms of assembly, monomer.

Its function is as follows. Pyridoxal 5'-phosphate (PLP)-binding protein, which is involved in PLP homeostasis. This is Pyridoxal phosphate homeostasis protein from Buchnera aphidicola subsp. Acyrthosiphon pisum (strain APS) (Acyrthosiphon pisum symbiotic bacterium).